The primary structure comprises 165 residues: MTLEEFSAGEQKTERMDKVGDALEEVLSKALSQRTITVGVYEAAKLLNVDPDNVVLCLLAADEDDDRDVALQIHFTLIQAFCCENDINILRVSNPGRLAELLLLETDAGPAASEGAEQPPDLHCVLVTNPHSSQWKDPALSQLICFCRESRYMDQWVPVINLPER.

Thr2 bears the Phosphothreonine mark.

Belongs to the GADD45 family. Interacts with MAPK14. Predominantly monomeric but also forms dimers and other oligomers as concentration increases. Interacts with GADD45GIP1. Interacts weakly with PCNA. Interacts with AURKA, likely to compete with dimerization.

The protein resides in the nucleus. Its function is as follows. In T-cells, functions as a regulator of p38 MAPKs by inhibiting p88 phosphorylation and activity. Might affect PCNA interaction with some CDK (cell division protein kinase) complexes; stimulates DNA excision repair in vitro and inhibits entry of cells into S phase. This Homo sapiens (Human) protein is Growth arrest and DNA damage-inducible protein GADD45 alpha (GADD45A).